The sequence spans 184 residues: Holliday junction branch migration complex subunit RuvA (184 aa).

Residues 1 to 64 (MIKAIEGVVT…EDANLLYGFL (64 aa)) are domain I. Positions 65-134 (DANEQKMFEM…IAELSDTKLI (70 aa)) are domain II. The flexible linker stretch occupies residues 134-137 (ISDE). The tract at residues 138 to 184 (SVPSYQNEALLALEALGFKREKIVKILPDCKSENTSDLIKEALKKLG) is domain III.

The protein belongs to the RuvA family. In terms of assembly, homotetramer. Forms an RuvA(8)-RuvB(12)-Holliday junction (HJ) complex. HJ DNA is sandwiched between 2 RuvA tetramers; dsDNA enters through RuvA and exits via RuvB. An RuvB hexamer assembles on each DNA strand where it exits the tetramer. Each RuvB hexamer is contacted by two RuvA subunits (via domain III) on 2 adjacent RuvB subunits; this complex drives branch migration. In the full resolvosome a probable DNA-RuvA(4)-RuvB(12)-RuvC(2) complex forms which resolves the HJ.

It is found in the cytoplasm. Functionally, the RuvA-RuvB-RuvC complex processes Holliday junction (HJ) DNA during genetic recombination and DNA repair, while the RuvA-RuvB complex plays an important role in the rescue of blocked DNA replication forks via replication fork reversal (RFR). RuvA specifically binds to HJ cruciform DNA, conferring on it an open structure. The RuvB hexamer acts as an ATP-dependent pump, pulling dsDNA into and through the RuvAB complex. HJ branch migration allows RuvC to scan DNA until it finds its consensus sequence, where it cleaves and resolves the cruciform DNA. The chain is Holliday junction branch migration complex subunit RuvA from Campylobacter concisus (strain 13826).